The chain runs to 289 residues: Thioredoxin-like protein 1 (289 aa).

A Thioredoxin domain is found at 2-109; it reads VGVKPVGSDP…EEKIKQHLEN (108 aa). A disulfide bridge connects residues cysteine 34 and cysteine 37. Serine 113 is modified (phosphoserine). The PITH domain maps to 115 to 285; that stretch reads EDTDIPKGYM…NDFKRVVGKK (171 aa).

As to quaternary structure, component of the 19S regulatory cap of the 26S proteasome. Interacts with PSMD14/RPN11. Interacts with, and reduces EEF1A1. As to expression, ubiquitous.

The protein localises to the cytoplasm. Its subcellular location is the nucleus. In terms of biological role, active thioredoxin with a redox potential of about -250 mV. The protein is Thioredoxin-like protein 1 (TXNL1) of Homo sapiens (Human).